Here is a 96-residue protein sequence, read N- to C-terminus: Co-chaperonin GroES (96 aa).

Belongs to the GroES chaperonin family. Heptamer of 7 subunits arranged in a ring. Interacts with the chaperonin GroEL.

It localises to the cytoplasm. Functionally, together with the chaperonin GroEL, plays an essential role in assisting protein folding. The GroEL-GroES system forms a nano-cage that allows encapsulation of the non-native substrate proteins and provides a physical environment optimized to promote and accelerate protein folding. GroES binds to the apical surface of the GroEL ring, thereby capping the opening of the GroEL channel. In Shewanella denitrificans (strain OS217 / ATCC BAA-1090 / DSM 15013), this protein is Co-chaperonin GroES.